A 253-amino-acid polypeptide reads, in one-letter code: Indole-3-glycerol phosphate synthase (253 aa).

The protein belongs to the TrpC family.

It carries out the reaction 1-(2-carboxyphenylamino)-1-deoxy-D-ribulose 5-phosphate + H(+) = (1S,2R)-1-C-(indol-3-yl)glycerol 3-phosphate + CO2 + H2O. It participates in amino-acid biosynthesis; L-tryptophan biosynthesis; L-tryptophan from chorismate: step 4/5. This chain is Indole-3-glycerol phosphate synthase, found in Bacillus cereus (strain ATCC 10987 / NRS 248).